A 341-amino-acid chain; its full sequence is Phenylalanine--tRNA ligase alpha subunit (341 aa).

Mg(2+) is bound at residue Glu-256.

Belongs to the class-II aminoacyl-tRNA synthetase family. Phe-tRNA synthetase alpha subunit type 1 subfamily. Tetramer of two alpha and two beta subunits. Mg(2+) is required as a cofactor.

The protein resides in the cytoplasm. The enzyme catalyses tRNA(Phe) + L-phenylalanine + ATP = L-phenylalanyl-tRNA(Phe) + AMP + diphosphate + H(+). This Leptospira interrogans serogroup Icterohaemorrhagiae serovar Lai (strain 56601) protein is Phenylalanine--tRNA ligase alpha subunit.